A 424-amino-acid polypeptide reads, in one-letter code: MLQDIMNTKKIKLHDCHFGSPLCDPSPAPHLLSSAAAAGLSFHPGLVSSAAQHQQHGAGGWLHEEYYAPRSSPPSSLLAQTCVGSNATAFYAAENLPQFDFPALGTAAAAAAKAPFRSSESELYRPVDPLLLRADHSVRTYYVRPQKRDSGERTPLPPPSQQQHQDRIHGLFAGAPTTRLLSGEPKIHLFPPQVAAKPILPAMDAPSLQNQMENQLTRNCIGAATPVTPTGNLAGSGAPSKTRIRWTQDLHERFVDCVNQLGGADKATPKGILKLMNSDGLTIYHIKSHLQKYRIAKYMPASSEGKQLEKRATGNDMQNLDPKTGMQITEALRVQLDVQRRLHEQLEIQRNLQLRIEEQGKRLQKMFEDQLKASRSVMEPQELDDVVAFAAGDGDDDAFDDVDVQLLAVAGSGYDDAGFQSKIS.

The segment at 144 to 165 (RPQKRDSGERTPLPPPSQQQHQ) is disordered. An HTH myb-type domain is found at 238–298 (APSKTRIRWT…HLQKYRIAKY (61 aa)). Positions 269 to 294 (PKGILKLMNSDGLTIYHIKSHLQKYR) form a DNA-binding region, H-T-H motif. The LHEQLE motif lies at 342–347 (LHEQLE). Positions 342-391 (LHEQLEIQRNLQLRIEEQGKRLQKMFEDQLKASRSVMEPQELDDVVAFAA) form a coiled coil.

It belongs to the MYB-CC family. As to quaternary structure, homodimer. Interacts with PHR2 in the nucleus. Interacts with SPX1 and SPX2 in the nucleus; these interactions prevent binding to the promoters of target genes, thus regulating negatively leaf inclination in response to phosphate (Pi) starvation.

The protein resides in the nucleus. In terms of biological role, transcription factor binding to specific DNA sequences of target genes promoters, such as the motif R1BS 5'-NAKATNCN-3' and the motif P1BS 5'-GNATATNC-3' to trigger their expression. Nitrate-induced component involved in modulating phosphate (Pi) response and homeostasis together with PHR2; activates directly the expression of Pi starvation-induced (PSI) genes upon nitrate disponibility, thus triggering the nitrate-induced phosphate response (NIPR) promoting Pi uptake activity. Involved in the shoot architecture; positively regulates leaf inclination by affecting lamina joint cell elongation via the direct promotion of ILI4/BU1 and BC1 genes expression, especially in response to phosphate (Pi) availability. Regulates both brassinolide (BL) biosynthesis and signaling by directly activating BL-biosynthesis and signaling genes. The chain is Myb family transcription factor RLI1 from Oryza sativa subsp. indica (Rice).